A 627-amino-acid chain; its full sequence is DNA mismatch repair protein MutL (627 aa).

The disordered stretch occupies residues 363–397 (FAEPAAREPVAPRYSPAPASGSRPAAPWPNAQPGY). A compositionally biased stretch (low complexity) spans 364-387 (AEPAAREPVAPRYSPAPASGSRPA).

It belongs to the DNA mismatch repair MutL/HexB family.

This protein is involved in the repair of mismatches in DNA. It is required for dam-dependent methyl-directed DNA mismatch repair. May act as a 'molecular matchmaker', a protein that promotes the formation of a stable complex between two or more DNA-binding proteins in an ATP-dependent manner without itself being part of a final effector complex. This chain is DNA mismatch repair protein MutL, found in Shigella flexneri serotype 5b (strain 8401).